The chain runs to 805 residues: Translation initiation factor IF-2 (805 aa).

Disordered stretches follow at residues 68 to 89 (VVTE…EKKE) and 141 to 215 (KEKE…KEKK). Basic and acidic residues predominate over residues 79 to 89 (VEEKKEEEKKE). Positions 306 to 474 (PRPPIVVVMG…MILLLADILE (169 aa)) constitute a tr-type G domain. Residues 315-322 (GHVDHGKT) are G1. 315–322 (GHVDHGKT) is a GTP binding site. The G2 stretch occupies residues 340-344 (GITQH). The interval 362 to 365 (DTPG) is G3. GTP is bound by residues 362–366 (DTPGH) and 416–419 (NKID). The interval 416 to 419 (NKID) is G4. The G5 stretch occupies residues 452–454 (SAK).

Belongs to the TRAFAC class translation factor GTPase superfamily. Classic translation factor GTPase family. IF-2 subfamily.

It localises to the cytoplasm. In terms of biological role, one of the essential components for the initiation of protein synthesis. Protects formylmethionyl-tRNA from spontaneous hydrolysis and promotes its binding to the 30S ribosomal subunits. Also involved in the hydrolysis of GTP during the formation of the 70S ribosomal complex. This Aquifex aeolicus (strain VF5) protein is Translation initiation factor IF-2 (infB).